A 501-amino-acid polypeptide reads, in one-letter code: MTNHSVILCILDGWGNGENNQFNAIAQAYKPCWDNITLQYPKSHLITHGSSVGLPDGQIGNSEVGHVNLGSGRIVLQDLCKINNEIKYIKDNVYLLEFINKIKKNNGICHIAGLLSDGGVHSSYTHILDIINTLSDFQIQVAVHIFLDGRDTPPISATKYISILCEHIKHLNNINIATLSGRYYAMDRDNRLDRTTKAYNAIAFANAKRYEDPLTAVQDSYNLGITDEFILPCIIGNYQGMKPQDGFIMTNFRSDRVIQIIKMIIGDIKTDNHITLDNTIGMVKYSDKINIPCLFPNNNITNTLGEVIANNQLHQLRIAETEKYAHVTFFFNGGKEDMFENEDRIIIPSPSVATYNLTPEMSAEKVTDTIIEKIKLQKYSLIIVNYANADMVGHTGNIDATKQAITTIDQCLSKILNCIQNTNYVLVITSDHGNAEEMFDVKNNMPYTAHTLNPVPFIICNYNKKIRLKNGRLCDVAPTILEILNLAKPKEMTGVSLIEQV.

Mn(2+) contacts are provided by D12 and S62. S62 (phosphoserine intermediate) is an active-site residue. Residues H121, 150 to 151 (RD), R182, R188, 253 to 256 (RSDR), and K323 contribute to the substrate site. Residues D390, H394, D431, H432, and H450 each contribute to the Mn(2+) site.

It belongs to the BPG-independent phosphoglycerate mutase family. In terms of assembly, monomer. It depends on Mn(2+) as a cofactor.

It carries out the reaction (2R)-2-phosphoglycerate = (2R)-3-phosphoglycerate. Its pathway is carbohydrate degradation; glycolysis; pyruvate from D-glyceraldehyde 3-phosphate: step 3/5. Functionally, catalyzes the interconversion of 2-phosphoglycerate and 3-phosphoglycerate. The chain is 2,3-bisphosphoglycerate-independent phosphoglycerate mutase from Ehrlichia canis (strain Jake).